Here is a 289-residue protein sequence, read N- to C-terminus: MDDKSMARGRKAFVTGFPIRHSRSPLIHGFWLKELGIDGSYEAVEVKPEDFSSFAASLAANGFAGGNVTIPHKEAAYAAAESLDEAARAIGAVNTLWLENGRLCGGNTDAYGFAANLDASAPGWDKADRALVLGAGGASRAVVHALLSRGVCHVSVVNRTLSRAEELAAHFGARVYAHGWDEAQALVSNAGLIVNTTALGMSGHGEGQDFPIDLTCAPKEAVATDIVYVPLRTAFLNKAEKAGLKTVDGLGMLLHQAVPGFERWFGQRPQVTQALREHILADMAKAGAL.

Shikimate contacts are provided by residues 22–24 (SRS) and threonine 69. The active-site Proton acceptor is lysine 73. NADP(+) is bound at residue glutamate 85. Positions 94 and 109 each coordinate shikimate. Residues 134–138 (GAGGA), 158–163 (NRTLSR), and isoleucine 226 each bind NADP(+). Residue tyrosine 228 participates in shikimate binding. NADP(+) is bound at residue glycine 249.

Belongs to the shikimate dehydrogenase family. As to quaternary structure, homodimer.

It catalyses the reaction shikimate + NADP(+) = 3-dehydroshikimate + NADPH + H(+). The protein operates within metabolic intermediate biosynthesis; chorismate biosynthesis; chorismate from D-erythrose 4-phosphate and phosphoenolpyruvate: step 4/7. In terms of biological role, involved in the biosynthesis of the chorismate, which leads to the biosynthesis of aromatic amino acids. Catalyzes the reversible NADPH linked reduction of 3-dehydroshikimate (DHSA) to yield shikimate (SA). The polypeptide is Shikimate dehydrogenase (NADP(+)) (Brucella melitensis biotype 2 (strain ATCC 23457)).